A 492-amino-acid polypeptide reads, in one-letter code: Zn(2)-C6 fungal-type transcription factor (492 aa).

Positions 14–41 (CRRCKNRKIKCDEVHPRCGNCAKHGVPC) form a DNA-binding region, zn(2)-C6 fungal-type. The interval 58-119 (TSTESVGAPT…QPSISSSTNT (62 aa)) is disordered. Low complexity predominate over residues 78 to 95 (SAPRTPLTRPRAPSSPAR). Thr82 bears the Phosphothreonine mark. A phosphoserine mark is found at Ser92 and Ser102. Residues 107–119 (VYSQPSISSSTNT) are compositionally biased toward polar residues. A Phosphothreonine modification is found at Thr217. Residue Ser305 is modified to Phosphoserine.

As to quaternary structure, interacts with HOG1. Post-translationally, phosphorylation at Thr-82, Ser-92, Ser-102, thr-117 and ser-305 by HOG1 is required for regulating expression of ergosterol biosynthesis genes.

The protein resides in the nucleus. Transcription factor that targets gene promoters containing 2 conserved CGAA repeat sequences. Positively regulates the expression of ergosterol biosynthesis genes including CYP51A and CYP51B encoding the sterol 14-alpha demethylase, and ERG6A and ERG6B encoding the sterol 24-C-methyltransferase. The polypeptide is Zn(2)-C6 fungal-type transcription factor (Gibberella zeae (strain ATCC MYA-4620 / CBS 123657 / FGSC 9075 / NRRL 31084 / PH-1) (Wheat head blight fungus)).